Consider the following 245-residue polypeptide: Putative transport permease YvfS (245 aa).

The next 6 helical transmembrane spans lie at 20–40, 53–73, 103–123, 137–157, 164–184, and 214–234; these read YFVLWSLIMPIAFYYFFTNVV, HYLMSMTVFSVMGSSIMTLGI, IGQSVIHVLSITVIFLFGAII, GLWILFGALPFLALGTLIGLM, AGISNVLYMLLALGGGMWMPF, and GSPTWKNILILIAYMMLFMLL. The ABC transmembrane type-2 domain occupies 20-242; sequence YFVLWSLIMP…LLSKYIRRKQ (223 aa).

The protein belongs to the ABC-2 integral membrane protein family.

It localises to the cell membrane. In Bacillus subtilis (strain 168), this protein is Putative transport permease YvfS (yvfS).